The chain runs to 94 residues: Conotoxin Qc6.1 (94 aa).

An N-terminal signal peptide occupies residues 1 to 22; that stretch reads MKLTCMMIVALLFLTAWTFVTA. The propeptide occupies 23–62; it reads VDSKNELENRGGWGQAGGWGKLFPMARDEMKNSEVSKLDN. 3 disulfides stabilise this stretch: C66/C84, C73/C88, and C83/C92.

Belongs to the conotoxin O1 superfamily. As to expression, expressed by the venom duct.

The protein localises to the secreted. This is Conotoxin Qc6.1 from Conus quercinus (Oak cone).